The sequence spans 545 residues: Chaperonin GroEL (545 aa).

ATP-binding positions include 29 to 32 (TLGP), lysine 50, 86 to 90 (DGTTT), glycine 415, and aspartate 495.

It belongs to the chaperonin (HSP60) family. As to quaternary structure, forms a cylinder of 14 subunits composed of two heptameric rings stacked back-to-back. Interacts with the co-chaperonin GroES.

The protein resides in the cytoplasm. The catalysed reaction is ATP + H2O + a folded polypeptide = ADP + phosphate + an unfolded polypeptide.. In terms of biological role, together with its co-chaperonin GroES, plays an essential role in assisting protein folding. The GroEL-GroES system forms a nano-cage that allows encapsulation of the non-native substrate proteins and provides a physical environment optimized to promote and accelerate protein folding. In Phocaeicola vulgatus (strain ATCC 8482 / DSM 1447 / JCM 5826 / CCUG 4940 / NBRC 14291 / NCTC 11154) (Bacteroides vulgatus), this protein is Chaperonin GroEL.